The primary structure comprises 177 residues: MSKQVEIFTDGACSGNPGPGGWGAILRFNGTTKELSGGEAETTNNRMELLAAISALNALKEPCTVELHTDSKYVMDGISKWIHGWKKNGWKTADKKPVKNGELWQALDEANRRHKVTWNWVKGHAGHTENERADELAREGMAPFKKGSFKPAASAPKPDAQLKQPVATKARRSTQSY.

An RNase H type-1 domain is found at methionine 1–alanine 142. Mg(2+)-binding residues include aspartate 10, glutamate 48, aspartate 70, and aspartate 134. Residues glycine 126 to arginine 138 are compositionally biased toward basic and acidic residues. The disordered stretch occupies residues glycine 126–tyrosine 177.

It belongs to the RNase H family. In terms of assembly, monomer. Mg(2+) serves as cofactor.

It localises to the cytoplasm. It carries out the reaction Endonucleolytic cleavage to 5'-phosphomonoester.. In terms of biological role, endonuclease that specifically degrades the RNA of RNA-DNA hybrids. In Mesorhizobium japonicum (strain LMG 29417 / CECT 9101 / MAFF 303099) (Mesorhizobium loti (strain MAFF 303099)), this protein is Ribonuclease H.